The primary structure comprises 377 residues: MPKKSIEEWEEDAIESVPYLASDEKGSNYKEATQIPLNLKQSEIENHPTVKPWVHFVAGGIGGMAGAVVTCPFDLVKTRLQSDIFLKAYKSQAVNISKGSTRPKSINYVIQAGTHFKETLGIIGNVYKQEGFRSLFKGLGPNLVGVIPARSINFFTYGTTKDMYAKAFNNGQETPMIHLMAAATAGWATATATNPIWLIKTRVQLDKAGKTSVRQYKNSWDCLKSVIRNEGFTGLYKGLSASYLGSVEGILQWLLYEQMKRLIKERSIEKFGYQAEGTKSTSEKVKEWCQRSGSAGLAKFVASIATYPHEVVRTRLRQTPKENGKRKYTGLVQSFKVIIKEEGLFSMYSGLTPHLMRTVPNSIIMFGTWEIVIRLLS.

3 Solcar repeats span residues 50–163 (VKPW…TKDM), 173–262 (ETPM…MKRL), and 286–375 (KEWC…VIRL). The next 6 helical transmembrane spans lie at 53–73 (WVHF…TCPF), 131–151 (GFRS…PARS), 179–199 (LMAA…IWLI), 238–258 (GLSA…LYEQ), 286–306 (KEWC…SIAT), and 347–368 (MYSG…MFGT).

This sequence belongs to the mitochondrial carrier (TC 2.A.29) family.

It localises to the mitochondrion inner membrane. The catalysed reaction is 5-methyl-UTP(out) + UTP(in) = 5-methyl-UTP(in) + UTP(out). Functionally, mitochondrial transporter that imports/exports pyrimidine nucleotides into and from mitochondria. Selectively transports uridine, thymidine, and cytosine (deoxy)nucleoside di- and triphosphates by an antiport mechanism. Also transports, with lower efficiency, uridine, thymidine, and cytosine (deoxy)nucleoside monophosphates as well as guanosine (deoxy)nucleoside di- and triphosphate. May import (deoxy)nucleoside triphosphates in exchange for intramitochondrial (deoxy)nucleoside monophosphates, thus providing precursors necessary for de novo synthesis of mitochondrial DNA and RNA while exporting products of their catabolism. Mediates the transport of iron and other divalent metal ions like copper and zinc across the mitochondrial inner membrane in a pyrimidine nucleotide-dependent fashion. Catalyzes the co-import of pyrimidine nucleotides and divalent metal ions including ferrous iron. Participates in mitochondrial genome maintenance, regulation of mitochondrial membrane potential and mitochondrial respiration. This Saccharomyces cerevisiae (strain ATCC 204508 / S288c) (Baker's yeast) protein is Mitochondrial pyrimidine nucleotide transporter RIM2 (RIM2).